A 316-amino-acid polypeptide reads, in one-letter code: Porphobilinogen deaminase (316 aa).

An S-(dipyrrolylmethanemethyl)cysteine modification is found at C245.

It belongs to the HMBS family. In terms of assembly, monomer. It depends on dipyrromethane as a cofactor.

It catalyses the reaction 4 porphobilinogen + H2O = hydroxymethylbilane + 4 NH4(+). It participates in porphyrin-containing compound metabolism; protoporphyrin-IX biosynthesis; coproporphyrinogen-III from 5-aminolevulinate: step 2/4. Its pathway is porphyrin-containing compound metabolism; chlorophyll biosynthesis. Tetrapolymerization of the monopyrrole PBG into the hydroxymethylbilane pre-uroporphyrinogen in several discrete steps. The polypeptide is Porphobilinogen deaminase (Prochlorococcus marinus subsp. pastoris (strain CCMP1986 / NIES-2087 / MED4)).